A 108-amino-acid polypeptide reads, in one-letter code: Precursor of CEP16 (108 aa).

A signal peptide spans 1 to 27 (MVMAKNLTKFYVVFLVVLMMVVSLLLA). A propeptide spanning residues 28 to 92 (IEGRPVKDSS…VGHHRAKGYK (65 aa)) is cleaved from the precursor. N-linked (GlcNAc...) asparagine glycans are attached at residues Asn-50 and Asn-98. The disordered stretch occupies residues 76-108 (QSGPSPGVGHHRAKGYKMFGRANDSGPSPGVGH). 2 positions are modified to hydroxyproline: Pro-102 and Pro-104.

The protein belongs to the C-terminally encoded plant signaling peptide (CEP) family. In terms of assembly, interacts with CEP receptors (e.g. CEPR1 and CEPR2). Post-translationally, the mature small signaling peptide is generated by proteolytic processing of the longer precursor.

The protein resides in the secreted. It is found in the extracellular space. It localises to the apoplast. Functionally, extracellular signaling peptide that may regulate primary root growth rate and systemic nitrogen (N)-demand signaling. The sequence is that of Precursor of CEP16 from Arabidopsis thaliana (Mouse-ear cress).